We begin with the raw amino-acid sequence, 376 residues long: MTQAQDHAKDHAMNIGVFIPIGNNGWLLSENAPQYMPSFELNKQITLKAEQHGLDFVLSMIKLRGFGGKTEFWDHNLESFTLMAGLAAVTSRIKLYATAPTLCLPPAIVARMASTIDSISNGRFGLNLVTGWQRPEYAQMGLWPGDEYFGRRYEYLSEYAQVLRELWETGRSDLKGEFFQMEDCRLSPRPQAEMKIICAGQSAAGMAFTATYADYNFCFGKGVNTPTAFAPTVERLEEAKAKTGRDVSSYVLFMVISDETDEAARAKWEHYKAGADAEAIAWLGLQGAADTKSGADTNIRQMADPTSAVNINMGTLVGSHATVAALLDEVVTVPGTGGVLLVFDDFLKGLDDFGTKIQPLMRSRRHVTGEALAEVA.

FMN is bound by residues 61 to 62, asparagine 127, glutamate 136, 152 to 153, and serine 202; these read IK and RY.

This sequence belongs to the NtaA/SnaA/DszA monooxygenase family. RutA subfamily.

The catalysed reaction is uracil + FMNH2 + NADH + O2 = (Z)-3-ureidoacrylate + FMN + NAD(+) + H2O + H(+). The enzyme catalyses thymine + FMNH2 + NADH + O2 = (Z)-2-methylureidoacrylate + FMN + NAD(+) + H2O + H(+). Functionally, catalyzes the pyrimidine ring opening between N-3 and C-4 by an unusual flavin hydroperoxide-catalyzed mechanism, adding oxygen atoms in the process to yield ureidoacrylate peracid, that immediately reacts with FMN forming ureidoacrylate and FMN-N(5)-oxide. The FMN-N(5)-oxide reacts spontaneously with NADH to produce FMN. Requires the flavin reductase RutF to regenerate FMN in vivo. This Methylorubrum extorquens (strain CM4 / NCIMB 13688) (Methylobacterium extorquens) protein is Pyrimidine monooxygenase RutA.